A 1520-amino-acid chain; its full sequence is DNA topoisomerase 2 top-2 (1520 aa).

A compositionally biased stretch (acidic residues) spans 1–10; the sequence is MSDSDSEFSI. A disordered region spans residues 1 to 40; the sequence is MSDSDSEFSIEDSPKKKTAPKKEKASPKKKKDDANESMVM. The segment covering 12-34 has biased composition (basic and acidic residues); the sequence is DSPKKKTAPKKEKASPKKKKDDA. ATP is bound by residues N126, N155, 183–185, 196–203, and 411–413; these read SSN, GRNGYGAK, and QTK. A Toprim domain is found at 490 to 607; it reads CTLILTEGDS…SLIQRNFVEE (118 aa). E496, D576, and D578 together coordinate Mg(2+). One can recognise a Topo IIA-type catalytic domain in the interval 750-1219; the sequence is IPCLVDGFKP…TWQDLWHEDL (470 aa). Y840 serves as the catalytic O-(5'-phospho-DNA)-tyrosine intermediate. The segment at 1249-1520 is disordered; the sequence is AADAKTGRGP…RGRVVDSDSD (272 aa). Over residues 1283 to 1320 the composition is skewed to basic and acidic residues; it reads TKAKYEKMSQPKKERVKKEPKEPKEPKKVKKEGQDIKK. The span at 1342–1364 shows a compositional bias: acidic residues; sequence MSEESDVEFDEGIDFDSDDDGVE.

This sequence belongs to the type II topoisomerase family. Homodimer. Interacts with nmad-1; the interaction is required for localization of top-2 to DNA. Interacts with gcna-1; this interaction allows the resolution of topoisomerase 2 DNA-protein cross-links. The cofactor is Mg(2+). Mn(2+) is required as a cofactor. Requires Ca(2+) as cofactor. As to expression, expressed in the hermaphrodite and male germline.

It is found in the nucleus. It localises to the nucleoplasm. The protein resides in the chromosome. Its subcellular location is the cytoplasm. The protein localises to the cytoskeleton. It is found in the spindle. It carries out the reaction ATP-dependent breakage, passage and rejoining of double-stranded DNA.. Its function is as follows. Control of topological states of DNA by transient breakage and subsequent rejoining of DNA strands. Topoisomerase II makes double-strand breaks. Essential during mitosis in the adult germline and during embryogenesis for proper segregation of daughter chromosomes. Required for centromere resolution during mitosis. Required for chromosome segregation in anaphase of meiosis I during spermatogenesis. Promotes cleavage furrow stability during cytokinesis upon the presence of chromatin obstructions. Promotes DNA break formation upon zygotic genome activation in the Z2 and Z3 primordial germ cells in L1 larvae, thereby activating a checkpoint response. Essential for embryogenesis. In Caenorhabditis elegans, this protein is DNA topoisomerase 2 top-2.